Here is a 430-residue protein sequence, read N- to C-terminus: Glutamate-1-semialdehyde 2,1-aminomutase (430 aa).

Lys-268 is subject to N6-(pyridoxal phosphate)lysine.

The protein belongs to the class-III pyridoxal-phosphate-dependent aminotransferase family. HemL subfamily. Pyridoxal 5'-phosphate is required as a cofactor.

The protein localises to the cytoplasm. It carries out the reaction (S)-4-amino-5-oxopentanoate = 5-aminolevulinate. It functions in the pathway porphyrin-containing compound metabolism; protoporphyrin-IX biosynthesis; 5-aminolevulinate from L-glutamyl-tRNA(Glu): step 2/2. This is Glutamate-1-semialdehyde 2,1-aminomutase from Methanopyrus kandleri (strain AV19 / DSM 6324 / JCM 9639 / NBRC 100938).